A 597-amino-acid chain; its full sequence is Bromodomain-containing protein 9 (597 aa).

Residues 1–10 (MGKKHKKHKA) are compositionally biased toward basic residues. Disordered stretches follow at residues 1 to 25 (MGKK…KPLE) and 38 to 138 (EVTE…ENES). Composition is skewed to basic and acidic residues over residues 11–25 (EWRS…KPLE) and 50–62 (SYYD…ERER). Residue Ser56 is modified to Phosphoserine. Positions 63 to 73 (HKEKKKKKKKK) are enriched in basic residues. The segment covering 74 to 85 (SEKEKHLDDEER) has biased composition (basic and acidic residues). Positions 86–97 (RKRKEEKKRKRE) are enriched in basic residues. Residues 111–126 (DPGKKVEVEPPPDRPV) show a composition bias toward basic and acidic residues. The Bromo domain occupies 136–240 (NESTPIQQLL…HAGFKMMSKQ (105 aa)). The histone H4K5ac H4K8ac and histone H4K5bu H4K8bu binding stretch occupies residues 214–216 (TYN). Lys373 carries the post-translational modification N6-acetyllysine; alternate. Lys373 is covalently cross-linked (Glycyl lysine isopeptide (Lys-Gly) (interchain with G-Cter in SUMO2); alternate). Positions 536–597 (EAQAERGGSR…SPEPAASAKT (62 aa)) are disordered. The segment covering 544 to 556 (SRPSSNLSSLSNA) has biased composition (low complexity). A phosphoserine mark is found at Ser566 and Ser588.

Binds acetylated histones H3 and H4. Binds butyrylated histone H4. Component of the multiprotein chromatin-remodeling subcomplex SWI/SNF called GBAF, which includes at least BICRA or BICRAL (mutually exclusive), BRD9, SS18, the core BAF subunits, SMARCA2/BRM, SMARCA4/BRG1/BAF190A, ACTL6A/BAF53, SMARCC1/BAF155, and SMARCD1/BAF60A. Interacts (via N-terminal bromodomain) with acetylated RAD54. Interacts (via C-terminus) with RAD51.

The protein localises to the nucleus. Functionally, plays a role in chromatin remodeling and regulation of transcription. Acts as a chromatin reader that recognizes and binds acylated histones: binds histones that are acetylated and/or butyrylated. Component of SWI/SNF chromatin remodeling subcomplex GBAF that carries out key enzymatic activities, changing chromatin structure by altering DNA-histone contacts within a nucleosome in an ATP-dependent manner. Also orchestrates the RAD51-RAD54 complex formation and thereby plays a role in homologous recombination (HR). The chain is Bromodomain-containing protein 9 (BRD9) from Homo sapiens (Human).